The primary structure comprises 673 residues: Bifunctional polymyxin resistance protein ArnA (673 aa).

The interval 1–311 is formyltransferase ArnAFT; it reads MKAIVFAYHD…EMGMVPQARL (311 aa). Catalysis depends on His104, which acts as the Proton donor; for formyltransferase activity. (6R)-10-formyltetrahydrofolate contacts are provided by residues Arg114 and 136–140; that span reads VSRAD. The segment at 321–673 is dehydrogenase ArnADH; the sequence is RRTRVLILGV…HTADATDTQG (353 aa). Residues Asp354 and 375–376 each bind NAD(+); that span reads DI. UDP-alpha-D-glucuronate-binding positions include Ala400, Tyr405, and 439 to 440; that span reads TS. Catalysis depends on Glu441, which acts as the Proton acceptor; for decarboxylase activity. Residues Arg467, Asn499, 533 to 542, and Tyr620 contribute to the UDP-alpha-D-glucuronate site; that span reads KLVDGGAQKR. Arg626 (proton donor; for decarboxylase activity) is an active-site residue.

The protein in the N-terminal section; belongs to the Fmt family. UDP-L-Ara4N formyltransferase subfamily. This sequence in the C-terminal section; belongs to the NAD(P)-dependent epimerase/dehydratase family. UDP-glucuronic acid decarboxylase subfamily. Homohexamer, formed by a dimer of trimers.

It carries out the reaction UDP-alpha-D-glucuronate + NAD(+) = UDP-beta-L-threo-pentopyranos-4-ulose + CO2 + NADH. It catalyses the reaction UDP-4-amino-4-deoxy-beta-L-arabinose + (6R)-10-formyltetrahydrofolate = UDP-4-deoxy-4-formamido-beta-L-arabinose + (6S)-5,6,7,8-tetrahydrofolate + H(+). The protein operates within nucleotide-sugar biosynthesis; UDP-4-deoxy-4-formamido-beta-L-arabinose biosynthesis; UDP-4-deoxy-4-formamido-beta-L-arabinose from UDP-alpha-D-glucuronate: step 1/3. Its pathway is nucleotide-sugar biosynthesis; UDP-4-deoxy-4-formamido-beta-L-arabinose biosynthesis; UDP-4-deoxy-4-formamido-beta-L-arabinose from UDP-alpha-D-glucuronate: step 3/3. It participates in bacterial outer membrane biogenesis; lipopolysaccharide biosynthesis. In terms of biological role, bifunctional enzyme that catalyzes the oxidative decarboxylation of UDP-glucuronic acid (UDP-GlcUA) to UDP-4-keto-arabinose (UDP-Ara4O) and the addition of a formyl group to UDP-4-amino-4-deoxy-L-arabinose (UDP-L-Ara4N) to form UDP-L-4-formamido-arabinose (UDP-L-Ara4FN). The modified arabinose is attached to lipid A and is required for resistance to polymyxin and cationic antimicrobial peptides. The sequence is that of Bifunctional polymyxin resistance protein ArnA from Pectobacterium atrosepticum (strain SCRI 1043 / ATCC BAA-672) (Erwinia carotovora subsp. atroseptica).